Consider the following 439-residue polypeptide: Tol-Pal system protein TolB (439 aa).

The first 21 residues, 1 to 21 (MRFRLALSLLSLALFAAPAAA), serve as a signal peptide directing secretion.

It belongs to the TolB family. As to quaternary structure, the Tol-Pal system is composed of five core proteins: the inner membrane proteins TolA, TolQ and TolR, the periplasmic protein TolB and the outer membrane protein Pal. They form a network linking the inner and outer membranes and the peptidoglycan layer.

Its subcellular location is the periplasm. Functionally, part of the Tol-Pal system, which plays a role in outer membrane invagination during cell division and is important for maintaining outer membrane integrity. This is Tol-Pal system protein TolB from Rhizorhabdus wittichii (strain DSM 6014 / CCUG 31198 / JCM 15750 / NBRC 105917 / EY 4224 / RW1) (Sphingomonas wittichii).